A 449-amino-acid chain; its full sequence is MYHIWIKFLAAWIFLKRFNGVHVMQAKAPMYRNEPFLVFWNAPTTQCRLRYKVDLDLKTFHIVSNANDSLSGSAVTIFYPNHLGVYPHIDDRGHFFHGIIPQNESLTKHLNKSKSDINRIIPLKAFHGLGVIDWENWRPQWDRNWGSKNVYRNRSIQFARDLHPELSEDKIRRLAKKEYEKAAKSFMRDTLLLAEEMRPDGYWGYYLYPDCQNYDYKTKGDQYTGKCPEIEMSRNDQLLWLWRDSTALFPNVYLEIILRSSDNALKFVHHRLKEAMRIASMAREDYALPVFAYARPFYAYTFEPLTQEDLVTTVGETAAMGAAGIVFWGSMQYASTVDSCQKVKKYMNGPLGRYIVNVTTAAKICSRVFCRKNGRCVRKHSDSNAFLHLFPESFRIMVYANATEKKVIVKGKLELENLIYLRENFMCQCYQGWKGLYCEEYSIKDIRKI.

The first 23 residues, 1 to 23 (MYHIWIKFLAAWIFLKRFNGVHV), serve as a signal peptide directing secretion. 2 cysteine pairs are disulfide-bonded: Cys47-Cys340 and Cys211-Cys227. N-linked (GlcNAc...) asparagine glycosylation is found at Asn67, Asn103, and Asn111. The Proton donor role is filled by Glu135. A glycan (N-linked (GlcNAc...) asparagine) is linked at Asn153. Asn357 carries N-linked (GlcNAc...) asparagine glycosylation. Intrachain disulfides connect Cys365/Cys376, Cys370/Cys427, and Cys429/Cys438. An N-linked (GlcNAc...) asparagine glycan is attached at Asn401. Residues 427-438 (CQCYQGWKGLYC) form the EGF-like domain.

This sequence belongs to the glycosyl hydrolase 56 family. As to quaternary structure, monomer. As to expression, expressed by the venom gland.

Its subcellular location is the secreted. It catalyses the reaction Random hydrolysis of (1-&gt;4)-linkages between N-acetyl-beta-D-glucosamine and D-glucuronate residues in hyaluronate.. In terms of biological role, snake venom endo-hyaluronidase that degrades hyaluronan to smaller oligosaccharide fragments. In venom, it is not toxic by itself, but increases the diffusion of other venom proteins by degrading the extracellular matrix. In addition, it displays antiedematogenic activity. The chain is Hyaluronidase from Echis pyramidum leakeyi (Leakey's carpet viper).